Reading from the N-terminus, the 814-residue chain is Ubiquitin carboxyl-terminal hydrolase 45 (814 aa).

Basic and acidic residues predominate over residues 1-14 (MRVKDPTKALPEKA). The interval 1 to 28 (MRVKDPTKALPEKAKRSKRPTVPHDEDS) is disordered. The tract at residues 1-62 (MRVKDPTKAL…AIAENLWSVC (62 aa)) is interaction with ERCC1. Phosphoserine is present on residues Ser-28 and Ser-29. Residues 36–153 (LTCQHVSHAI…AQIVDFLQKH (118 aa)) form a UBP-type zinc finger. 12 residues coordinate Zn(2+): Cys-38, His-40, Cys-62, Cys-65, Cys-85, Cys-88, Cys-93, His-101, His-105, His-114, Cys-127, and Cys-130. Positions 190-813 (RGITNLGNTC…QAYLLFYERV (624 aa)) constitute a USP domain. The active-site Nucleophile is the Cys-199. Disordered stretches follow at residues 418 to 443 (IENI…IHDR) and 479 to 533 (ESRL…PDGP). Over residues 432-443 (SSKDKSQLIHDR) the composition is skewed to basic and acidic residues. A phosphoserine mark is found at Ser-508 and Ser-526. Over residues 515–527 (KQTGLFRSSSGSG) the composition is skewed to polar residues. His-746 serves as the catalytic Proton acceptor.

This sequence belongs to the peptidase C19 family. Interacts with ERCC1. The catalytically active form interacts with SPDL1. In terms of tissue distribution, widely expressed. High expression is detected in the cerebellum. In the eye, it is expressed at high levels in the optic nerve, sclera and retina, with relatively low levels in the choroid, lens and retinal pigment epithelium.

Its subcellular location is the photoreceptor inner segment. It is found in the cytoplasm. It localises to the nucleus. It catalyses the reaction Thiol-dependent hydrolysis of ester, thioester, amide, peptide and isopeptide bonds formed by the C-terminal Gly of ubiquitin (a 76-residue protein attached to proteins as an intracellular targeting signal).. In terms of biological role, catalyzes the deubiquitination of SPDL1. Plays a role in the repair of UV-induced DNA damage via deubiquitination of ERCC1, promoting its recruitment to DNA damage sites. May be involved in the maintenance of photoreceptor function. May play a role in normal retinal development. Plays a role in cell migration. The polypeptide is Ubiquitin carboxyl-terminal hydrolase 45 (USP45) (Homo sapiens (Human)).